Consider the following 145-residue polypeptide: Flagellar assembly factor FliW (145 aa).

It belongs to the FliW family. Interacts with translational regulator CsrA and flagellin(s).

The protein localises to the cytoplasm. Its function is as follows. Acts as an anti-CsrA protein, binds CsrA and prevents it from repressing translation of its target genes, one of which is flagellin. Binds to flagellin and participates in the assembly of the flagellum. This is Flagellar assembly factor FliW from Anoxybacillus flavithermus (strain DSM 21510 / WK1).